We begin with the raw amino-acid sequence, 113 residues long: UPF0482 protein YnfB (113 aa).

Residues 1-28 form the signal peptide; that stretch reads MKITLSKRIGLLAFLLPCALALSTTVHA.

This sequence belongs to the UPF0482 family.

This chain is UPF0482 protein YnfB, found in Shigella flexneri serotype 5b (strain 8401).